The sequence spans 146 residues: VHWSAEEKQLITSIWGKVNVADCGAEALARLLIVYPWTQRFFSSFGNLSSATAISGNPNVKAHGKKVLTSFGDAVKNLDNIKGTFAQLSELHCDKLHVDPENFRLLGDILVIILAAHFGKDFTPECQAAWQKLVRVVAHALARKYH.

The region spanning 2-146 (HWSAEEKQLI…VAHALARKYH (145 aa)) is the Globin domain. Residues histidine 63 and histidine 92 each coordinate heme b.

This sequence belongs to the globin family. In terms of assembly, heterotetramer of two alpha chains and two beta chains. In terms of tissue distribution, red blood cells.

Involved in oxygen transport from the lung to the various peripheral tissues. This chain is Hemoglobin subunit beta (HBB), found in Columba livia (Rock dove).